Here is a 175-residue protein sequence, read N- to C-terminus: Pycsar effector protein RsPycTM (175 aa).

The next 3 helical transmembrane spans lie at 17–37 (AKNAALLTFCSVWMGAIITLL), 44–64 (PLGFDYAFKASLTVLFIAAII), and 146–166 (AGSLVLFAFGIMMVPPILFCI).

The protein localises to the cell inner membrane. Its function is as follows. Pycsar (pyrimidine cyclase system for antiphage resistance) provides immunity against bacteriophage. The pyrimidine cyclase (PycC) synthesizes cyclic nucleotides in response to infection; these serve as specific second messenger signals. The signals activate the nearby effector, leading to bacterial cell death and abortive phage infection. A clade A Pycsar system. Functionally, the effector gene of a two-gene Pycsar system. Expression of this and uridylate cyclase RsPycC (AC A0A4R2TZQ0) probably confers resistance to bacteriophage. The genes are probably only expressed in response to bacteriophage infection. Probably only responds to cUMP (produced by its cognate NTP cyclase), acts by impairing membrane integrity. This chain is Pycsar effector protein RsPycTM, found in Rhizobium sp. (strain PP-F2F-G36).